A 67-amino-acid polypeptide reads, in one-letter code: UPF0437 protein y4xE (67 aa).

The protein belongs to the UPF0437 family.

This is UPF0437 protein y4xE from Sinorhizobium fredii (strain NBRC 101917 / NGR234).